Reading from the N-terminus, the 148-residue chain is Protein-export protein SecB (148 aa).

This sequence belongs to the SecB family. As to quaternary structure, homotetramer, a dimer of dimers. One homotetramer interacts with 1 SecA dimer.

Its subcellular location is the cytoplasm. Functionally, one of the proteins required for the normal export of preproteins out of the cell cytoplasm. It is a molecular chaperone that binds to a subset of precursor proteins, maintaining them in a translocation-competent state. It also specifically binds to its receptor SecA. The sequence is that of Protein-export protein SecB from Psychrobacter arcticus (strain DSM 17307 / VKM B-2377 / 273-4).